We begin with the raw amino-acid sequence, 296 residues long: Cadherin-4 (296 aa).

3 Cadherin domains span residues 1–101 (NVPE…RPEF), 102–216 (INQV…PPEF), and 217–296 (TTST…MLTI). Over 1 to 296 (NVPENSRGPF…ELNRAFMLTI (296 aa)) the chain is Extracellular. 2 N-linked (GlcNAc...) asparagine glycosylation sites follow: Asn107 and Asn236.

The protein resides in the cell membrane. Cadherins are calcium-dependent cell adhesion proteins. They preferentially interact with themselves in a homophilic manner in connecting cells; cadherins may thus contribute to the sorting of heterogeneous cell types. May play an important role in retinal development. The polypeptide is Cadherin-4 (Cdh4) (Rattus norvegicus (Rat)).